A 210-amino-acid polypeptide reads, in one-letter code: Glutathione S-transferase P (210 aa).

One can recognise a GST N-terminal domain in the interval 2 to 81; sequence PPYTVVYFPV…HLGRTLGLYG (80 aa). A Phosphotyrosine; by EGFR modification is found at Y4. Glutathione is bound by residues Y8, R14, W39, K45, and 52-53; that span reads QL. Position 62 is a phosphothreonine (T62). Residue 65-66 coordinates glutathione; it reads QS. Residues 83-204 enclose the GST C-terminal domain; that stretch reads DQREAALVDM…ASPEHVNLPI (122 aa). 2 positions are modified to N6-succinyllysine: K103 and K116. An N6-acetyllysine modification is found at K128.

It belongs to the GST superfamily. Pi family. As to quaternary structure, homodimer. Interacts with CDK5.

It localises to the cytoplasm. Its subcellular location is the mitochondrion. The protein resides in the nucleus. It carries out the reaction RX + glutathione = an S-substituted glutathione + a halide anion + H(+). The catalysed reaction is prostaglandin J2 + glutathione = prostaglandin J2-S-(R)-glutathione. It catalyses the reaction prostaglandin J2 + glutathione = prostaglandin J2-S-(S)-glutathione. The enzyme catalyses prostaglandin A2 + glutathione = prostaglandin A2-S-(S)-glutathione. It carries out the reaction 11(S)-hydroxy-14(S),15(S)-epoxy-(5Z,8Z,12E)-eicosatrienoate + glutathione = (11S,15S)-dihydroxy-14(R)-S-glutathionyl-(5Z,8Z,12E)-eicosatrienoate. In terms of biological role, conjugation of reduced glutathione to a wide number of exogenous and endogenous hydrophobic electrophiles. Involved in the formation of glutathione conjugates of both prostaglandin A2 (PGA2) and prostaglandin J2 (PGJ2). Participates in the formation of novel hepoxilin regioisomers. Negatively regulates CDK5 activity via p25/p35 translocation to prevent neurodegeneration. The polypeptide is Glutathione S-transferase P (GSTP1) (Macaca mulatta (Rhesus macaque)).